The primary structure comprises 695 residues: WD repeat-containing protein 93 (695 aa).

The interval 1-35 (MSSFKGNQAQKRRLSVFPKGPLEIPSPTEADWPKD) is disordered. A WD repeat occupies 421–460 (PCAAPIVMSQISSFSSYLALVCEDGVLILWDLAEGFLFGV).

In terms of tissue distribution, testis-specific. Expressed in spermatogonia, spermatocytes and spermatids.

This Mus musculus (Mouse) protein is WD repeat-containing protein 93 (Wdr93).